The following is a 605-amino-acid chain: Sulfite reductase [NADPH] flavoprotein alpha-component (605 aa).

A Flavodoxin-like domain is found at 70-208 (LTIIYASQTG…PAAEWRVKAL (139 aa)). Residues 76-81 (SQTGNA), 123-126 (STHG), and 159-168 (LGDSSYEFFC) contribute to the FMN site. Residues 240–454 (QNPYEATLLT…VEENNNFKLP (215 aa)) form the FAD-binding FR-type domain. Residues threonine 328, glycine 362, 392 to 395 (RLYS), 410 to 412 (TVG), and 425 to 428 (GGAS) contribute to the FAD site. Residues 525–526 (SR), 531–535 (KVYVQ), and aspartate 567 contribute to the NADP(+) site. Tyrosine 605 contacts FAD.

Belongs to the NADPH-dependent sulphite reductase flavoprotein subunit CysJ family. It in the N-terminal section; belongs to the flavodoxin family. The protein in the C-terminal section; belongs to the flavoprotein pyridine nucleotide cytochrome reductase family. As to quaternary structure, alpha(8)-beta(8). The alpha component is a flavoprotein, the beta component is a hemoprotein. It depends on FAD as a cofactor. FMN serves as cofactor.

The catalysed reaction is hydrogen sulfide + 3 NADP(+) + 3 H2O = sulfite + 3 NADPH + 4 H(+). Its pathway is sulfur metabolism; hydrogen sulfide biosynthesis; hydrogen sulfide from sulfite (NADPH route): step 1/1. Functionally, component of the sulfite reductase complex that catalyzes the 6-electron reduction of sulfite to sulfide. This is one of several activities required for the biosynthesis of L-cysteine from sulfate. The flavoprotein component catalyzes the electron flow from NADPH -&gt; FAD -&gt; FMN to the hemoprotein component. This Photobacterium profundum (strain SS9) protein is Sulfite reductase [NADPH] flavoprotein alpha-component.